The primary structure comprises 560 residues: Choline/ethanolamine transporter FLVCR1 (560 aa).

Residues 1–43 form a disordered region; the sequence is MARPDDEVGPAVAPGHPLGKGYLPVPKGAPDGEARLVPQNGPE. Topologically, residues 1 to 92 are cytoplasmic; that stretch reads MARPDDEVGP…EDVPCPACPP (92 aa). A helical transmembrane segment spans residues 93 to 117; it reads RTALSPRRFVVLLIFSLYSLVNAFQ. The Extracellular segment spans residues 118–135; it reads WIQYSSISNVFEDFYEVS. Residues 136-163 traverse the membrane as a helical segment; sequence PLHINWLSMVYMVAYVPLIFPATWLLDT. The Cytoplasmic portion of the chain corresponds to 164–165; that stretch reads RG. A helical membrane pass occupies residues 166 to 185; sequence LRLTALLGSGLNCLGAWVKC. Residues 186 to 192 are Extracellular-facing; that stretch reads GSVQRHL. Residues 193 to 221 traverse the membrane as a helical segment; it reads FWVTMLGQILCSVAQVFILGLPSPVASVW. Glutamine 207 is an ethanolamine binding site. The Cytoplasmic portion of the chain corresponds to 222 to 226; it reads FGPKE. The helical transmembrane segment at 227-252 threads the bilayer; sequence VSTACATAVLGNQLGTAVGFLLPPVL. The Extracellular segment spans residues 253–270; the sequence is VPALGTQNSTGLLAHTQN. Asparagine 270 carries N-linked (GlcNAc...) asparagine glycosylation. A helical membrane pass occupies residues 271–300; that stretch reads NTDLLAHNINTMFYGTAFISTFLFFLTIIA. Residues 301–336 are Cytoplasmic-facing; sequence FKEKPPLPPSQAQAVLRDSPPEEYSYKSSIWNLCRN. A helical membrane pass occupies residues 337–367; that stretch reads IPFVLLLVSYGIMTGAFYSISTLLNQIILTY. Residues 368–371 are Extracellular-facing; it reads YVGE. The chain crosses the membrane as a helical span at residues 372–400; sequence EVNAGRIGLTLVVAGMVGSILCGLWLDYT. Topologically, residues 401–402 are cytoplasmic; it reads KT. A helical transmembrane segment spans residues 403-425; that stretch reads YKQTTLIVYVLSFIGMLIFTFTL. Topologically, residues 426–428 are extracellular; it reads NLG. A helical membrane pass occupies residues 429 to 458; sequence YIIVVFFTGGILGFFMTGYLPLGFEFAVEI. Residues 459–466 lie on the Cytoplasmic side of the membrane; that stretch reads TYPESEGM. A helical membrane pass occupies residues 467-492; it reads SSGLLNTAAQILGIFFTLAQGKITTD. Glutamine 476 provides a ligand contact to ethanolamine. Glutamine 476 serves as a coordination point for choline. Topologically, residues 493 to 495 are extracellular; the sequence is YNS. Residues 496 to 518 form a helical membrane-spanning segment; sequence PEAGNIFLCAWMFVGIILTALIK. Over 519–560 the chain is Cytoplasmic; the sequence is SDLRRHNINTGLTNIDVKAVPVDSRVDPKPKVMVSIQSESSL. Phosphoserine is present on serine 542.

The protein belongs to the major facilitator superfamily. Feline leukemia virus subgroup C receptor (TC 2.A.1.28.1) family.

It is found in the cell membrane. Its subcellular location is the mitochondrion membrane. It catalyses the reaction choline(out) = choline(in). It carries out the reaction ethanolamine(in) = ethanolamine(out). The catalysed reaction is heme b(in) = heme b(out). In terms of biological role, uniporter that mediates the transport of extracellular choline and ethanolamine into cells, thereby playing a key role in phospholipid biosynthesis. Choline and ethanolamine are the precursors of phosphatidylcholine and phosphatidylethanolamine, respectively, the two most abundant phospholipids. Transport is not coupled with proton transport and is exclusively driven by the choline (or ethanolamine) gradient across the plasma membrane. Also acts as a heme b transporter that mediates heme efflux from the cytoplasm to the extracellular compartment. Its function is as follows. Uniporter that mediates the transport of extracellular choline and ethanolamine into cells. Choline and ethanolamine are the precursors of phosphatidylcholine and phosphatidylethanolamine, respectively, the two most abundant phospholipids. Transport is not coupled with proton transport and is exclusively driven by the choline (or ethanolamine) gradient across the plasma membrane. Also acts as a heme b transporter that mediates heme efflux from the cytoplasm to the extracellular compartment. Heme export depends on the presence of HPX and is required to maintain intracellular free heme balance, protecting cells from heme toxicity. Heme export provides protection from heme or ferrous iron toxicities in liver, brain, sensory neurons and during erythropoiesis, a process in which heme synthesis intensifies. Possibly export coproporphyrin and protoporphyrin IX, which are both intermediate products in the heme biosynthetic pathway. Does not export bilirubin. The molecular mechanism of heme transport, whether electrogenic, electroneutral or coupled to other ions, remains to be elucidated. Functionally, heme transporter that promotes heme efflux from the mitochondrion to the cytoplasm. Essential for erythroid differentiation. This chain is Choline/ethanolamine transporter FLVCR1 (Flvcr1), found in Mus musculus (Mouse).